The primary structure comprises 359 residues: DNA replication and repair protein RecF (359 aa).

Residue glycine 30–threonine 37 participates in ATP binding.

It belongs to the RecF family.

The protein resides in the cytoplasm. The RecF protein is involved in DNA metabolism; it is required for DNA replication and normal SOS inducibility. RecF binds preferentially to single-stranded, linear DNA. It also seems to bind ATP. The sequence is that of DNA replication and repair protein RecF from Protochlamydia amoebophila (strain UWE25).